A 713-amino-acid polypeptide reads, in one-letter code: Probable tRNA (uracil-O(2)-)-methyltransferase (713 aa).

2 disordered regions span residues 49–92 (TLRS…REGT) and 480–508 (LHSRQGHPQSRPGGAHAPSAPQTAAHDAG). Position 76 is a phosphoserine (S76). Over residues 79-89 (GEPESGPRASR) the composition is skewed to basic and acidic residues. Residue S489 is modified to Phosphoserine. The C3H1-type zinc finger occupies 669-698 (FKTRICWFFAHHPDGCVLPAAQCPFAHGPE).

It belongs to the TRM44 family.

It localises to the cytoplasm. It carries out the reaction uridine(44) in tRNA(Ser) + S-adenosyl-L-methionine = 2'-O-methyluridine(44) in tRNA(Ser) + S-adenosyl-L-homocysteine + H(+). Probable adenosyl-L-methionine (AdoMet)-dependent tRNA (uracil-O(2)-)-methyltransferase. This Mus musculus (Mouse) protein is Probable tRNA (uracil-O(2)-)-methyltransferase (Trmt44).